The sequence spans 20 residues: Ferric reductase A (20 aa).

Monomer.

It catalyses the reaction 2 a Fe(II)-siderophore + NAD(+) + H(+) = 2 a Fe(III)-siderophore + NADH. Functionally, reductase activity that acts on Fe(3+)-chelates and NADH as an electron donor and requires the presence of FMN for full activity. May play a role in iron uptake. The protein is Ferric reductase A (ferA) of Paracoccus denitrificans.